The sequence spans 342 residues: Galactose mutarotase (342 aa).

Ala-2 bears the N-acetylalanine mark. Ser-14 is modified (phosphoserine). Residues 81–82 (NR) and His-107 each bind beta-D-galactose. Phosphoserine is present on Ser-124. His-176 (proton donor) is an active-site residue. Residues 176–178 (HSY), Asp-243, Gln-279, and Glu-307 each bind beta-D-galactose. Residue Glu-307 is the Proton acceptor of the active site.

The protein belongs to the aldose epimerase family. In terms of assembly, monomer.

The protein localises to the cytoplasm. It carries out the reaction alpha-D-galactose = beta-D-galactose. The enzyme catalyses alpha-D-glucose = beta-D-glucose. It functions in the pathway carbohydrate metabolism; hexose metabolism. The protein operates within carbohydrate metabolism; galactose metabolism. Mutarotase that catalyzes the interconversion of beta-D-galactose and alpha-D-galactose during galactose metabolism. Beta-D-galactose is metabolized in the liver into glucose 1-phosphate, the primary metabolic fuel, by the action of four enzymes that constitute the Leloir pathway: GALM, GALK1 (galactokinase), GALT (galactose-1-phosphate uridylyltransferase) and GALE (UDP-galactose-4'-epimerase). Involved in the maintenance of the equilibrium between the beta- and alpha-anomers of galactose, therefore ensuring a sufficient supply of the alpha-anomer for GALK1. Also active on D-glucose although shows a preference for galactose over glucose. The chain is Galactose mutarotase (GALM) from Pongo abelii (Sumatran orangutan).